The primary structure comprises 379 residues: MPADDYPVTELTKALIARPSVTPLDEGCQTLMAERLSAIGFNIEPMVFEDTTNMWARRGNEGPVFCFAGHTDVVPTGDVSRWHTPPFVPTIIDGYLYGRGAADMKGSLAAMIIATERFVAKHPDHHGSIAFLITSDEEGPFINGTTRVIDTLEARNEKITWALVGEPSSTLKLGDVVKNGRRGSLTGNLTVKGIQGHVAYPHLADNPIHKAAPFLAELSQMHWDNGNEFFPPTSFQIANINGGTGASNVIPGALDVMFNFRYSTEVSADILIERVEALLKAHELDYDISWIFNGLPFLTGDGPLLDATRIAIRQVTGYETDPQTTGGTSDGRFIAPTGAKVLELGPVNATIHKVNECVKVDDLEQLALCYEVILEQLLC.

Zn(2+) is bound at residue H70. D72 is a catalytic residue. D103 is a Zn(2+) binding site. Residue E137 is the Proton acceptor of the active site. Residues E138, E166, and H352 each contribute to the Zn(2+) site.

Belongs to the peptidase M20A family. DapE subfamily. In terms of assembly, homodimer. Requires Zn(2+) as cofactor. Co(2+) is required as a cofactor.

The catalysed reaction is N-succinyl-(2S,6S)-2,6-diaminopimelate + H2O = (2S,6S)-2,6-diaminopimelate + succinate. The protein operates within amino-acid biosynthesis; L-lysine biosynthesis via DAP pathway; LL-2,6-diaminopimelate from (S)-tetrahydrodipicolinate (succinylase route): step 3/3. Its function is as follows. Catalyzes the hydrolysis of N-succinyl-L,L-diaminopimelic acid (SDAP), forming succinate and LL-2,6-diaminopimelate (DAP), an intermediate involved in the bacterial biosynthesis of lysine and meso-diaminopimelic acid, an essential component of bacterial cell walls. The protein is Succinyl-diaminopimelate desuccinylase of Shewanella baltica (strain OS195).